Reading from the N-terminus, the 123-residue chain is MAGGSGNSDEELLRAVRIIKILYQSNPYPSPEGSRQARRNRRRRWRARQRQINSLSERILSTCLERPTGPVSLPLPPIERLTLDSAEDIGTGGTDPPQGTETGTGSPNTPEGHSTILGTGAKN.

A phosphoserine; by host CK2 mark is found at Ser5 and Ser8. Residues 18–26 form a homomultimerization region; that stretch reads IIKILYQSN. Disordered stretches follow at residues 24–49 and 82–123; these read QSNPYPSPEGSRQARRNRRRRWRARQ and TLDS…GAKN. Positions 34–50 match the Nuclear localization signal and RNA-binding (RRE) motif; sequence SRQARRNRRRRWRARQR. The span at 36–49 shows a compositional bias: basic residues; sequence QARRNRRRRWRARQ. A Nuclear export signal and binding to XPO1 motif is present at residues 73–84; it reads LPLPPIERLTLD. Residues 97 to 112 are compositionally biased toward polar residues; the sequence is PQGTETGTGSPNTPEG.

It belongs to the HIV-1 REV protein family. Homomultimer; when bound to the RRE. Multimeric assembly is essential for activity and may involve XPO1. Binds to human KPNB1, XPO1, TNPO1, RANBP5 and IPO7. Interacts with the viral Integrase. Interacts with human KHDRBS1. Interacts with human NAP1; this interaction decreases Rev multimerization and stimulates its activity. Interacts with human DEAD-box helicases DDX3 and DDX24; these interactions may serve for viral RNA export to the cytoplasm and packaging, respectively. Interacts with human PSIP1; this interaction may inhibit HIV-1 DNA integration by promoting dissociation of the Integrase-LEDGF/p75 complex. In terms of processing, asymmetrically arginine dimethylated at one site by host PRMT6. Methylation impairs the RNA-binding activity and export of viral RNA from the nucleus to the cytoplasm. Phosphorylated by protein kinase CK2. Presence of, and maybe binding to the N-terminus of the regulatory beta subunit of CK2 is necessary for CK2-mediated Rev's phosphorylation.

Its subcellular location is the host nucleus. It localises to the host nucleolus. The protein localises to the host cytoplasm. In terms of biological role, escorts unspliced or incompletely spliced viral pre-mRNAs (late transcripts) out of the nucleus of infected cells. These pre-mRNAs carry a recognition sequence called Rev responsive element (RRE) located in the env gene, that is not present in fully spliced viral mRNAs (early transcripts). This function is essential since most viral proteins are translated from unspliced or partially spliced pre-mRNAs which cannot exit the nucleus by the pathway used by fully processed cellular mRNAs. Rev itself is translated from a fully spliced mRNA that readily exits the nucleus. Rev's nuclear localization signal (NLS) binds directly to KPNB1/Importin beta-1 without previous binding to KPNA1/Importin alpha-1. KPNB1 binds to the GDP bound form of RAN (Ran-GDP) and targets Rev to the nucleus. In the nucleus, the conversion from Ran-GDP to Ran-GTP dissociates Rev from KPNB1 and allows Rev's binding to the RRE in viral pre-mRNAs. Rev multimerization on the RRE via cooperative assembly exposes its nuclear export signal (NES) to the surface. Rev can then form a complex with XPO1/CRM1 and Ran-GTP, leading to nuclear export of the complex. Conversion from Ran-GTP to Ran-GDP mediates dissociation of the Rev/RRE/XPO1/RAN complex, so that Rev can return to the nucleus for a subsequent round of export. Beside KPNB1, also seems to interact with TNPO1/Transportin-1, RANBP5/IPO5 and IPO7/RANBP7 for nuclear import. The nucleoporin-like HRB/RIP is an essential cofactor that probably indirectly interacts with Rev to release HIV RNAs from the perinuclear region to the cytoplasm. This Simian immunodeficiency virus (isolate MB66) (SIV-cpz) protein is Protein Rev.